A 99-amino-acid polypeptide reads, in one-letter code: Prostate and testis expressed protein 4 (99 aa).

Residues 1 to 23 (MNSVTKISTLLIVILSFLCFVEG) form the signal peptide. The region spanning 24 to 99 (LICNSCEKSR…CCEKNLCNSF (76 aa)) is the UPAR/Ly6 domain. 4 disulfides stabilise this stretch: C26/C52, C29/C37, C44/C70, and C74/C90.

In terms of tissue distribution, expressed in prostate, testis, eye, kidney and skeletal muscle. Expressed in the dorsal lobe of prostate. Not expressed in the ventral lobe of prostate.

The protein resides in the secreted. In terms of biological role, enhances sperm motility. Binds to calmodulin and inhibits calcium transport into spermatozoa. May modulate the function of nicotinic acetylcholine receptors. In Mus musculus (Mouse), this protein is Prostate and testis expressed protein 4 (Pate4).